We begin with the raw amino-acid sequence, 261 residues long: tRNA pseudouridine synthase A (261 aa).

The Nucleophile role is filled by aspartate 55. Position 114 (tyrosine 114) interacts with substrate.

This sequence belongs to the tRNA pseudouridine synthase TruA family. In terms of assembly, homodimer.

The catalysed reaction is uridine(38/39/40) in tRNA = pseudouridine(38/39/40) in tRNA. Its function is as follows. Formation of pseudouridine at positions 38, 39 and 40 in the anticodon stem and loop of transfer RNAs. The polypeptide is tRNA pseudouridine synthase A (Paracoccus denitrificans (strain Pd 1222)).